The chain runs to 193 residues: MRPARRFLAALACVAGALLSACATPTPRAERAVLREVSAQFFLGGRMSASDGNQGASGRIEWQHDTAGDEVTVYSPLGQIAARLISSPTGAELLTSDGQRYQAENAEALMPRVFGFGVPVSRLAHWVQAAPPPGAEVRELDAAGRPALVIDQGWRVDYLEYPDTRARTLPTRVEVSRGDARIRLIIDQWELLQ.

An N-terminal signal peptide occupies residues 1-21 (MRPARRFLAALACVAGALLSA). Cys-22 carries the N-palmitoyl cysteine lipid modification. The S-diacylglycerol cysteine moiety is linked to residue Cys-22.

It belongs to the LolB family. In terms of assembly, monomer.

Its subcellular location is the cell outer membrane. Functionally, plays a critical role in the incorporation of lipoproteins in the outer membrane after they are released by the LolA protein. The polypeptide is Outer-membrane lipoprotein LolB (Azoarcus sp. (strain BH72)).